The sequence spans 159 residues: Cytochrome c-type biogenesis protein CcmE (159 aa).

Over 1–7 the chain is Cytoplasmic; that stretch reads MTPRQRR. Residues 8-28 form a helical; Signal-anchor for type II membrane protein membrane-spanning segment; the sequence is LGMLLAALACAGIALALVLNA. Residues 29-159 are Periplasmic-facing; the sequence is FRSNLVFFFS…LAEGERETQR (131 aa). Residues H123 and Y127 each coordinate heme.

This sequence belongs to the CcmE/CycJ family.

The protein localises to the cell inner membrane. Functionally, heme chaperone required for the biogenesis of c-type cytochromes. Transiently binds heme delivered by CcmC and transfers the heme to apo-cytochromes in a process facilitated by CcmF and CcmH. The protein is Cytochrome c-type biogenesis protein CcmE of Cupriavidus pinatubonensis (strain JMP 134 / LMG 1197) (Cupriavidus necator (strain JMP 134)).